The primary structure comprises 804 residues: Phenylalanine--tRNA ligase beta subunit (804 aa).

In terms of domain architecture, tRNA-binding spans 40-161 (FSMIDYLIIG…KANLGDTEVY (122 aa)). One can recognise a B5 domain in the interval 413–486 (EYHQQVKVNY…KILNINLFQP (74 aa)). Mg(2+) contacts are provided by Asp464, Asp470, Glu473, and Glu474. The FDX-ACB domain occupies 710-804 (DHYQEVTRDI…DLMKTKQILI (95 aa)).

It belongs to the phenylalanyl-tRNA synthetase beta subunit family. Type 1 subfamily. As to quaternary structure, tetramer of two alpha and two beta subunits. Mg(2+) is required as a cofactor.

The protein localises to the cytoplasm. It catalyses the reaction tRNA(Phe) + L-phenylalanine + ATP = L-phenylalanyl-tRNA(Phe) + AMP + diphosphate + H(+). The sequence is that of Phenylalanine--tRNA ligase beta subunit from Mycoplasmoides gallisepticum (strain R(low / passage 15 / clone 2)) (Mycoplasma gallisepticum).